Reading from the N-terminus, the 156-residue chain is Small ribosomal subunit protein uS7 (156 aa).

This sequence belongs to the universal ribosomal protein uS7 family. In terms of assembly, part of the 30S ribosomal subunit. Contacts proteins S9 and S11.

One of the primary rRNA binding proteins, it binds directly to 16S rRNA where it nucleates assembly of the head domain of the 30S subunit. Is located at the subunit interface close to the decoding center, probably blocks exit of the E-site tRNA. In Shewanella sediminis (strain HAW-EB3), this protein is Small ribosomal subunit protein uS7.